Reading from the N-terminus, the 278-residue chain is 2-heptyl-3-hydroxy-4-quinolone dioxygenase AqdC1 (278 aa).

Residues 29–158 form the AB hydrolase-1 domain; that stretch reads PTIVMLPGWC…GWVDSCRALF (130 aa). Position 103 (histidine 103) interacts with substrate. Histidine 250 functions as the Proton donor/acceptor in the catalytic mechanism.

This sequence belongs to the AB hydrolase superfamily.

It carries out the reaction 2-heptyl-3-hydroxy-4(1H)-quinolone + O2 = N-octanoylanthranilate + CO + H(+). Functionally, involved in the degradation of the Pseudomonas aeruginosa quorum sensing signal molecules HHQ (2-heptyl-4-quinolone) and PQS (2-heptyl-3-hydroxy-4-quinolone) to anthranilic acid. Catalyzes the cleavage of PQS to form N-octanoylanthranilic acid and carbon monoxide. This chain is 2-heptyl-3-hydroxy-4-quinolone dioxygenase AqdC1, found in Rhodococcus erythropolis (Arthrobacter picolinophilus).